A 572-amino-acid chain; its full sequence is Proteinaceous RNase P 1, chloroplastic/mitochondrial (572 aa).

The transit peptide at 1–70 (MLRLTCFTPS…SRHLCTLPLA (70 aa)) directs the protein to the chloroplast and mitochondrion. PPR repeat units follow at residues 96–130 (PEALLKQKLDMCSKKGDVLEALRLYDEARRNGVQL), 136–174 (NVLLYVCSLAEAATESSPNPGLSRGFDIFKQMIVDKVVP), 175–209 (NEATFTNGARLAVAKDDPEMAFDMVKQMKAFGIQP), and 210–244 (RLRSYGPALFGFCRKGDADKAYEVDAHMVESEVVP). In terms of domain architecture, PRORP spans 338–565 (MDENGVCKCC…DLQTSRQWLC (228 aa)). Residues cysteine 344 and cysteine 347 each contribute to the Zn(2+) site. Residues aspartate 399, aspartate 474, aspartate 475, and aspartate 493 each coordinate Mn(2+). 2 residues coordinate Zn(2+): histidine 548 and cysteine 565.

This sequence belongs to the PPR family. P subfamily. The cofactor is Mg(2+). It depends on Mn(2+) as a cofactor.

Its subcellular location is the mitochondrion. The protein localises to the plastid. The protein resides in the chloroplast. It carries out the reaction Endonucleolytic cleavage of RNA, removing 5'-extranucleotides from tRNA precursor.. In terms of biological role, endonuclease RNase P responsible for the 5' maturation of tRNA precursors. Preferentially cleaves at the unusual cleavage site, but also able to cleave at the classical cleavage site. Also involved in the maturation of mRNAs in mitochondria. The protein is Proteinaceous RNase P 1, chloroplastic/mitochondrial (PRORP1) of Arabidopsis thaliana (Mouse-ear cress).